A 300-amino-acid chain; its full sequence is uncharacterized protein (300 aa).

The first 20 residues, 1–20 (MRLLISCILILSILVNFISG), serve as a signal peptide directing secretion. The Extracellular segment spans residues 21-279 (HAVLVAPTPF…PCSIYGDGNG (259 aa)). N-linked (GlcNAc...) asparagine glycans are attached at residues Asn-56, Asn-217, and Asn-278. Residues 280–300 (SNLIIIPTLLIISILSLILMF) traverse the membrane as a helical segment.

Its subcellular location is the membrane. This is an uncharacterized protein from Dictyostelium discoideum (Social amoeba).